The chain runs to 350 residues: Ferredoxin--NADP reductase (350 aa).

FAD-binding residues include Thr-14, Asp-33, Gln-41, Tyr-46, Ala-86, Phe-121, Asp-286, and Thr-327.

Belongs to the ferredoxin--NADP reductase type 2 family. In terms of assembly, homodimer. FAD is required as a cofactor.

It catalyses the reaction 2 reduced [2Fe-2S]-[ferredoxin] + NADP(+) + H(+) = 2 oxidized [2Fe-2S]-[ferredoxin] + NADPH. This Flavobacterium johnsoniae (strain ATCC 17061 / DSM 2064 / JCM 8514 / BCRC 14874 / CCUG 350202 / NBRC 14942 / NCIMB 11054 / UW101) (Cytophaga johnsonae) protein is Ferredoxin--NADP reductase.